A 178-amino-acid chain; its full sequence is Large ribosomal subunit protein uL16 (178 aa).

Belongs to the universal ribosomal protein uL16 family.

The chain is Large ribosomal subunit protein uL16 from Pyrobaculum calidifontis (strain DSM 21063 / JCM 11548 / VA1).